The chain runs to 250 residues: GTP cyclohydrolase 1 type 2 homolog (250 aa).

The a divalent metal cation site is built by His-63, His-64, Asp-100, His-218, and Glu-222.

This sequence belongs to the GTP cyclohydrolase I type 2/NIF3 family. As to quaternary structure, homohexamer.

This chain is GTP cyclohydrolase 1 type 2 homolog, found in Pyrococcus horikoshii (strain ATCC 700860 / DSM 12428 / JCM 9974 / NBRC 100139 / OT-3).